An 884-amino-acid chain; its full sequence is Protein translocase subunit SecA (884 aa).

ATP is bound by residues Q83, 101–105 (GEGKT), and D491.

It belongs to the SecA family.

It localises to the plastid. Its subcellular location is the chloroplast stroma. It is found in the chloroplast thylakoid membrane. The catalysed reaction is ATP + H2O + cellular proteinSide 1 = ADP + phosphate + cellular proteinSide 2.. Its function is as follows. Has a central role in coupling the hydrolysis of ATP to the transfer of proteins across the thylakoid membrane. The chain is Protein translocase subunit SecA from Pyropia yezoensis (Susabi-nori).